Reading from the N-terminus, the 195-residue chain is Molybdenum cofactor guanylyltransferase (195 aa).

GTP-binding positions include 10-12 (LAG), Lys-23, Asn-51, Asp-69, and Asp-99. Asp-99 contacts Mg(2+).

Belongs to the MobA family. Monomer. It depends on Mg(2+) as a cofactor.

Its subcellular location is the cytoplasm. It catalyses the reaction Mo-molybdopterin + GTP + H(+) = Mo-molybdopterin guanine dinucleotide + diphosphate. In terms of biological role, transfers a GMP moiety from GTP to Mo-molybdopterin (Mo-MPT) cofactor (Moco or molybdenum cofactor) to form Mo-molybdopterin guanine dinucleotide (Mo-MGD) cofactor. The polypeptide is Molybdenum cofactor guanylyltransferase (Yersinia pestis bv. Antiqua (strain Antiqua)).